Consider the following 908-residue polypeptide: Translation initiation factor IF-2 (908 aa).

Disordered stretches follow at residues 52 to 229 (QSHG…AEEA) and 241 to 316 (AGQY…SAQH). The span at 65–84 (KSKTTSTARVTGSSGKSKSV) shows a compositional bias: polar residues. Basic and acidic residues-rich tracts occupy residues 94 to 108 (FEKP…ELAA), 120 to 138 (AAKD…EERQ), 176 to 185 (IEVKPKEQPK), 193 to 229 (PKVE…AEEA), 270 to 280 (SFEKERREIKR), and 294 to 303 (KNQDEREIKN). Positions 409–578 (TRPPVVTIMG…SLQAELMELE (170 aa)) constitute a tr-type G domain. Residues 418-425 (GHVDHGKT) form a G1 region. A GTP-binding site is contributed by 418–425 (GHVDHGKT). A G2 region spans residues 443-447 (GITQH). A G3 region spans residues 464 to 467 (DTPG). GTP-binding positions include 464-468 (DTPGH) and 518-521 (NKMD). Positions 518-521 (NKMD) are G4. Positions 554–556 (SAK) are G5.

This sequence belongs to the TRAFAC class translation factor GTPase superfamily. Classic translation factor GTPase family. IF-2 subfamily.

The protein localises to the cytoplasm. Functionally, one of the essential components for the initiation of protein synthesis. Protects formylmethionyl-tRNA from spontaneous hydrolysis and promotes its binding to the 30S ribosomal subunits. Also involved in the hydrolysis of GTP during the formation of the 70S ribosomal complex. This is Translation initiation factor IF-2 from Psychrobacter arcticus (strain DSM 17307 / VKM B-2377 / 273-4).